Reading from the N-terminus, the 634-residue chain is Ankyrin repeat and SOCS box protein 2 (634 aa).

Residues 26 to 45 (SEEELVQMAIEQSLADKTRG) form the UIM domain. The disordered stretch occupies residues 35-81 (IEQSLADKTRGPTPAETSVSSQTNHQPGHIHPWTRSSSPPESPPARA). A compositionally biased stretch (polar residues) spans 49-60 (AETSVSSQTNHQ). ANK repeat units follow at residues 104 to 133 (AAMD…NLAE), 137 to 167 (EGWL…TIDQ), 171 to 200 (QEET…EPDI), 204 to 233 (SRET…DANH), 237 to 266 (RGWT…KVEA), 270 to 299 (YSIT…DINT), 303 to 332 (DSAS…DANK), 336 to 365 (DGLL…RTRV), 368 to 397 (SGIS…DVNT), 410 to 439 (RRTS…DPNR), 440 to 469 (DVIS…NIDA), and 476 to 504 (TAFP…DGEP). A Phosphoserine modification is found at Ser-371. The SOCS box domain maps to 580–634 (EDWAVIKEKAEPPRPLAHLCRLRVRKAIGKYRIKLLDTLPLPGRLIRYLKYENTQ).

This sequence belongs to the ankyrin SOCS box (ASB) family. In terms of assembly, component of a probable ECS E3 ubiquitin-protein ligase complex which contains CUL5, either RBX1 or RNF7/RBX2, Elongin BC complex (ELOB and ELOC) and ASB2. Interacts with SKP2. Through its interaction with SKP2, likely to bridge the formation of dimeric E3-ubiquitin-protein ligase complexes composed of an ECS complex and an SCF(SKP2) complex. Interacts with JAK2; the interaction targets JAK2 for Notch-mediated proteasomal degradation. Interacts with TCF3/E2A; the interaction is mediated by SKP2 and targets TCF3 for Notch-mediated proteasomal degradation. Interacts with DES. In terms of processing, monoubiquitinated.

The protein localises to the cytoplasm. It localises to the cytoskeleton. The protein resides in the stress fiber. It is found in the myofibril. Its subcellular location is the sarcomere. The protein localises to the z line. The protein operates within protein modification; protein ubiquitination. Its function is as follows. Substrate-recognition component of a SCF-like ECS (Elongin-Cullin-SOCS-box protein) E3 ubiquitin-protein ligase complex which mediates the ubiquitination and subsequent proteasomal degradation of target proteins. Mediates Notch-induced ubiquitination and degradation of substrates including E2A and JAK2. Required during embryonic heart development for complete heart looping. Required for cardiomyocyte differentiation. Involved in myogenic differentiation and targets filamin FLNB for proteasomal degradation but not filamin FLNA. Also targets DES for proteasomal degradation. Acts as a negative regulator of skeletal muscle mass. This is Ankyrin repeat and SOCS box protein 2 from Rattus norvegicus (Rat).